Consider the following 236-residue polypeptide: 15,16-dihydrobiliverdin:ferredoxin oxidoreductase (236 aa).

It belongs to the HY2 family.

The enzyme catalyses 15,16-dihydrobiliverdin + oxidized 2[4Fe-4S]-[ferredoxin] = biliverdin IXalpha + reduced 2[4Fe-4S]-[ferredoxin] + 2 H(+). In terms of biological role, catalyzes the two-electron reduction of biliverdin IX-alpha at the C15 methine bridge. This Prochlorococcus marinus (strain MIT 9515) protein is 15,16-dihydrobiliverdin:ferredoxin oxidoreductase.